Consider the following 217-residue polypeptide: Peroxiredoxin Q, chloroplastic (217 aa).

The transit peptide at 1–66 directs the protein to the chloroplast; that stretch reads MAFAASTACC…RRRAASTGIV (66 aa). The 148-residue stretch at 70–217 folds into the Thioredoxin domain; the sequence is VSKGSVPPNF…GETLKIIQNL (148 aa). The active-site Cysteine sulfenic acid (-SOH) intermediate is the Cys-112. An intrachain disulfide couples Cys-112 to Cys-117.

The protein belongs to the peroxiredoxin family. BCP/PrxQ subfamily. In terms of assembly, monomer.

It is found in the plastid. The protein resides in the chloroplast thylakoid lumen. It catalyses the reaction a hydroperoxide + [thioredoxin]-dithiol = an alcohol + [thioredoxin]-disulfide + H2O. Thiol-specific peroxidase that catalyzes the reduction of hydrogen peroxide and organic hydroperoxides to water and alcohols, respectively. Plays a role in cell protection against oxidative stress by detoxifying peroxides. This is Peroxiredoxin Q, chloroplastic (PRX1) from Triticum aestivum (Wheat).